We begin with the raw amino-acid sequence, 339 residues long: Phenylalanine--tRNA ligase alpha subunit (339 aa).

Glutamate 250 provides a ligand contact to Mg(2+).

This sequence belongs to the class-II aminoacyl-tRNA synthetase family. Phe-tRNA synthetase alpha subunit type 1 subfamily. In terms of assembly, tetramer of two alpha and two beta subunits. Requires Mg(2+) as cofactor.

It is found in the cytoplasm. It catalyses the reaction tRNA(Phe) + L-phenylalanine + ATP = L-phenylalanyl-tRNA(Phe) + AMP + diphosphate + H(+). This chain is Phenylalanine--tRNA ligase alpha subunit, found in Christiangramia forsetii (strain DSM 17595 / CGMCC 1.15422 / KT0803) (Gramella forsetii).